A 301-amino-acid polypeptide reads, in one-letter code: Probable tRNA pseudouridine synthase B (301 aa).

Residue D54 is the Nucleophile of the active site. The PUA domain occupies 227-301 (LPRLTIADSA…VVVALERVLV (75 aa)).

This sequence belongs to the pseudouridine synthase TruB family. Type 2 subfamily.

The catalysed reaction is uridine(55) in tRNA = pseudouridine(55) in tRNA. Its function is as follows. Could be responsible for synthesis of pseudouridine from uracil-55 in the psi GC loop of transfer RNAs. This Halobacterium salinarum (strain ATCC 29341 / DSM 671 / R1) protein is Probable tRNA pseudouridine synthase B.